The chain runs to 72 residues: UPF0346 protein GTNG_1419 (72 aa).

The protein belongs to the UPF0346 family.

This Geobacillus thermodenitrificans (strain NG80-2) protein is UPF0346 protein GTNG_1419.